Consider the following 1226-residue polypeptide: Methionine synthase (1226 aa).

In terms of domain architecture, Hcy-binding spans 6-326 (RQQIEAQLKQ…EHIRQMAQAV (321 aa)). The Zn(2+) site is built by cysteine 248, cysteine 311, and cysteine 312. Positions 357 to 618 (FINVGERTNV…VPEKLREAVE (262 aa)) constitute a Pterin-binding domain. Residues 651–745 (SALEWRTWPV…FINAEKQSGS (95 aa)) enclose the B12-binding N-terminal domain. Methylcob(III)alamin-binding positions include glutamate 695, 757-761 (GDVHD), histidine 760, serine 805, threonine 809, and alanine 861. The B12-binding domain maps to 747 to 882 (NGKILLATVK…SDERRPAFIE (136 aa)). In terms of domain architecture, AdoMet activation spans 898 to 1226 (KKPRTKPVTL…EKWLGPNING (329 aa)). Residues aspartate 948, arginine 1136, and 1191–1192 (YF) each bind S-adenosyl-L-methionine.

Belongs to the vitamin-B12 dependent methionine synthase family. Requires methylcob(III)alamin as cofactor. The cofactor is Zn(2+).

The enzyme catalyses (6S)-5-methyl-5,6,7,8-tetrahydrofolate + L-homocysteine = (6S)-5,6,7,8-tetrahydrofolate + L-methionine. It functions in the pathway amino-acid biosynthesis; L-methionine biosynthesis via de novo pathway; L-methionine from L-homocysteine (MetH route): step 1/1. In terms of biological role, catalyzes the transfer of a methyl group from methyl-cobalamin to homocysteine, yielding enzyme-bound cob(I)alamin and methionine. Subsequently, remethylates the cofactor using methyltetrahydrofolate. The sequence is that of Methionine synthase (metH) from Vibrio parahaemolyticus serotype O3:K6 (strain RIMD 2210633).